The primary structure comprises 584 residues: Arginine--tRNA ligase (584 aa).

Residues 130 to 140 (PNVAKEMHVGH) carry the 'HIGH' region motif.

It belongs to the class-I aminoacyl-tRNA synthetase family. In terms of assembly, monomer.

The protein localises to the cytoplasm. It carries out the reaction tRNA(Arg) + L-arginine + ATP = L-arginyl-tRNA(Arg) + AMP + diphosphate. This is Arginine--tRNA ligase from Protochlamydia amoebophila (strain UWE25).